The primary structure comprises 324 residues: Methionyl-tRNA formyltransferase (324 aa).

Residue 109–112 (SILP) participates in (6S)-5,6,7,8-tetrahydrofolate binding.

It belongs to the Fmt family.

The catalysed reaction is L-methionyl-tRNA(fMet) + (6R)-10-formyltetrahydrofolate = N-formyl-L-methionyl-tRNA(fMet) + (6S)-5,6,7,8-tetrahydrofolate + H(+). Attaches a formyl group to the free amino group of methionyl-tRNA(fMet). The formyl group appears to play a dual role in the initiator identity of N-formylmethionyl-tRNA by promoting its recognition by IF2 and preventing the misappropriation of this tRNA by the elongation apparatus. This Acidothermus cellulolyticus (strain ATCC 43068 / DSM 8971 / 11B) protein is Methionyl-tRNA formyltransferase.